The primary structure comprises 397 residues: Lysophospholipid transporter LplT (397 aa).

A run of 11 helical transmembrane segments spans residues 21-41 (SAQF…LALL), 53-73 (ILQM…GQVA), 91-111 (LGAA…LVGI), 139-159 (LMES…GVLA), 164-184 (LAAL…NLFI), 229-249 (WGAG…ALGI), 257-277 (YLNA…AKLV), 281-301 (TVRR…FFSL), 304-324 (ALLP…FFIV), 344-364 (IAVQ…LYSL), and 372-392 (VVGI…GLWI).

The protein belongs to the major facilitator superfamily. LplT (TC 2.A.1.42) family.

The protein resides in the cell inner membrane. Catalyzes the facilitated diffusion of 2-acyl-glycero-3-phosphoethanolamine (2-acyl-GPE) into the cell. The protein is Lysophospholipid transporter LplT of Enterobacter sp. (strain 638).